The primary structure comprises 464 residues: ATP synthase subunit beta 2 (464 aa).

ATP is bound at residue G153–T160.

Belongs to the ATPase alpha/beta chains family. F-type ATPases have 2 components, CF(1) - the catalytic core - and CF(0) - the membrane proton channel. CF(1) has five subunits: alpha(3), beta(3), gamma(1), delta(1), epsilon(1). CF(0) has three main subunits: a(1), b(2) and c(9-12). The alpha and beta chains form an alternating ring which encloses part of the gamma chain. CF(1) is attached to CF(0) by a central stalk formed by the gamma and epsilon chains, while a peripheral stalk is formed by the delta and b chains.

It localises to the cell inner membrane. The catalysed reaction is ATP + H2O + 4 H(+)(in) = ADP + phosphate + 5 H(+)(out). Produces ATP from ADP in the presence of a proton gradient across the membrane. The catalytic sites are hosted primarily by the beta subunits. This is ATP synthase subunit beta 2 from Paraburkholderia xenovorans (strain LB400).